The following is a 299-amino-acid chain: Tyrosine recombinase XerC (299 aa).

The Core-binding (CB) domain occupies 1–85 (MERQLDAYCE…AVRGLYHYLN (85 aa)). In terms of domain architecture, Tyr recombinase spans 106–285 (RLPKTLDTDR…DFQHLAAVYD (180 aa)). Residues Arg-146, Lys-170, His-237, Arg-240, and His-263 contribute to the active site. Tyr-272 acts as the O-(3'-phospho-DNA)-tyrosine intermediate in catalysis.

The protein belongs to the 'phage' integrase family. XerC subfamily. As to quaternary structure, forms a cyclic heterotetrameric complex composed of two molecules of XerC and two molecules of XerD.

Its subcellular location is the cytoplasm. Site-specific tyrosine recombinase, which acts by catalyzing the cutting and rejoining of the recombining DNA molecules. The XerC-XerD complex is essential to convert dimers of the bacterial chromosome into monomers to permit their segregation at cell division. It also contributes to the segregational stability of plasmids. This Pseudomonas fluorescens (strain Pf0-1) protein is Tyrosine recombinase XerC.